The primary structure comprises 463 residues: 23S rRNA (uracil(1939)-C(5))-methyltransferase RlmD (463 aa).

In terms of domain architecture, TRAM spans 6-76 (KSRKPQQPEY…KRLEEAEMVE (71 aa)). 4 residues coordinate [4Fe-4S] cluster: cysteine 90, cysteine 96, cysteine 99, and cysteine 178. Residues glutamine 288, phenylalanine 317, asparagine 322, glutamate 341, aspartate 368, and aspartate 389 each coordinate S-adenosyl-L-methionine. The active-site Nucleophile is the cysteine 415.

The protein belongs to the class I-like SAM-binding methyltransferase superfamily. RNA M5U methyltransferase family. RlmD subfamily.

It carries out the reaction uridine(1939) in 23S rRNA + S-adenosyl-L-methionine = 5-methyluridine(1939) in 23S rRNA + S-adenosyl-L-homocysteine + H(+). Its function is as follows. Catalyzes the formation of 5-methyl-uridine at position 1939 (m5U1939) in 23S rRNA. The chain is 23S rRNA (uracil(1939)-C(5))-methyltransferase RlmD from Acinetobacter baumannii (strain AYE).